The chain runs to 193 residues: Riboflavin kinase (193 aa).

Residues 1–59 (MGISQQAASQHLRELEDEGLITRNAEGKGISVMVTDKGRHELLRVYNILHDSLHSRPDH) form an H-T-H motif-like region. The interval 60–193 (VEITGTLVSG…TIRIPLEQED (134 aa)) is riboflavin kinase. CDP is bound at residue 69–74 (GMNEGA). Mg(2+) is bound by residues Thr-98 and Asn-100. FMN contacts are provided by Thr-156 and Glu-164. 169–172 (LDIR) provides a ligand contact to CDP.

The protein belongs to the archaeal riboflavin kinase family. Mg(2+) is required as a cofactor.

It carries out the reaction riboflavin + CTP = CDP + FMN + H(+). Its pathway is cofactor biosynthesis; FMN biosynthesis; FMN from riboflavin (CTP route): step 1/1. In terms of biological role, catalyzes the CTP-dependent phosphorylation of riboflavin (vitamin B2) to form flavin mononucleotide (FMN). The protein is Riboflavin kinase (ribK) of Cenarchaeum symbiosum (strain A).